A 64-amino-acid chain; its full sequence is Large ribosomal subunit protein uL30 (64 aa).

Belongs to the universal ribosomal protein uL30 family. As to quaternary structure, part of the 50S ribosomal subunit.

The sequence is that of Large ribosomal subunit protein uL30 from Rhodopseudomonas palustris (strain HaA2).